Consider the following 262-residue polypeptide: Outer dense fiber protein 1 (262 aa).

Serine 5 and serine 10 each carry phosphoserine. Repeat 1 spans residues 34-38; that stretch reads RCLCD. Positions 34–77 are 2 X 5 AA repeats of [RC]-C-L-C-D; it reads RCLCDLYMHPYCCCDLHPYPYCLCYSKRSRSCGLCDLYPCCLCD. Phosphoserine is present on serine 64. Repeat unit 2 spans residues 73-77; sequence CCLCD. Serine 86, serine 122, serine 123, serine 151, serine 167, serine 189, and serine 194 each carry phosphoserine. Residues 209 to 250 form a C-X-P repeat region region; that stretch reads CNPCNPCSPCNPCNPCNPCNPCSPCSPCSPCNPCDPCNPCYP.

In terms of assembly, interacts (via leucine zipper motif) with TCP11. Interacts with SPAG4. Interacts with KLC3. Interacts with CCDC42.

The protein resides in the cell projection. Its subcellular location is the cilium. The protein localises to the flagellum. It is found in the cytoplasm. It localises to the cytoskeleton. The protein resides in the microtubule organizing center. Its subcellular location is the centrosome. Component of the outer dense fibers (ODF) of spermatozoa. ODF are filamentous structures located on the outside of the axoneme in the midpiece and principal piece of the mammalian sperm tail and may help to maintain the passive elastic structures and elastic recoil of the sperm tail. This Sus scrofa (Pig) protein is Outer dense fiber protein 1 (ODF1).